The following is an 89-amino-acid chain: Small ribosomal subunit protein uS15c (89 aa).

The protein belongs to the universal ribosomal protein uS15 family. In terms of assembly, part of the 30S ribosomal subunit.

The protein localises to the plastid. The protein resides in the chloroplast. This is Small ribosomal subunit protein uS15c (rps15) from Chloranthus spicatus (Chulantree).